A 70-amino-acid polypeptide reads, in one-letter code: Small ribosomal subunit protein bS21 (70 aa).

The protein belongs to the bacterial ribosomal protein bS21 family.

This chain is Small ribosomal subunit protein bS21, found in Chromobacterium violaceum (strain ATCC 12472 / DSM 30191 / JCM 1249 / CCUG 213 / NBRC 12614 / NCIMB 9131 / NCTC 9757 / MK).